The primary structure comprises 251 residues: UPF0309 protein SCO4393 (251 aa).

One can recognise an SIS domain in the interval 36-220 (LADTVQNGGR…AATLADRGIE (185 aa)).

This sequence belongs to the UPF0309 family.

The chain is UPF0309 protein SCO4393 from Streptomyces coelicolor (strain ATCC BAA-471 / A3(2) / M145).